A 692-amino-acid polypeptide reads, in one-letter code: Elongation factor G (692 aa).

In terms of domain architecture, tr-type G spans 8 to 282 (ENTRNIGIMA…AVIDYLPSPL (275 aa)). Residues 17-24 (AHIDAGKT), 81-85 (DTPGH), and 135-138 (NKMD) contribute to the GTP site.

Belongs to the TRAFAC class translation factor GTPase superfamily. Classic translation factor GTPase family. EF-G/EF-2 subfamily.

The protein localises to the cytoplasm. Functionally, catalyzes the GTP-dependent ribosomal translocation step during translation elongation. During this step, the ribosome changes from the pre-translocational (PRE) to the post-translocational (POST) state as the newly formed A-site-bound peptidyl-tRNA and P-site-bound deacylated tRNA move to the P and E sites, respectively. Catalyzes the coordinated movement of the two tRNA molecules, the mRNA and conformational changes in the ribosome. This Bacillus cereus (strain ATCC 14579 / DSM 31 / CCUG 7414 / JCM 2152 / NBRC 15305 / NCIMB 9373 / NCTC 2599 / NRRL B-3711) protein is Elongation factor G.